The following is a 500-amino-acid chain: Cytochrome P450 2D28 (500 aa).

C446 is a heme binding site.

It belongs to the cytochrome P450 family. Heme is required as a cofactor.

Its subcellular location is the endoplasmic reticulum membrane. It is found in the microsome membrane. The chain is Cytochrome P450 2D28 (CYP2D28A) from Mesocricetus auratus (Golden hamster).